The following is a 138-amino-acid chain: Mini-ribonuclease 3 (138 aa).

The active site involves Asp-33.

Belongs to the MrnC RNase family. As to quaternary structure, homodimer. The cofactor is Mg(2+).

It is found in the cytoplasm. Functionally, involved in correct processing of both the 5' and 3' ends of 23S rRNA precursor. Processes 30S rRNA precursor transcript even in absence of ribonuclease 3 (Rnc); Rnc processes 30S rRNA into smaller rRNA precursors. In Synechococcus sp. (strain ATCC 27144 / PCC 6301 / SAUG 1402/1) (Anacystis nidulans), this protein is Mini-ribonuclease 3.